Consider the following 201-residue polypeptide: Thymidylate kinase (201 aa).

G7–T14 is an ATP binding site.

The protein belongs to the thymidylate kinase family.

The enzyme catalyses dTMP + ATP = dTDP + ADP. Phosphorylation of dTMP to form dTDP in both de novo and salvage pathways of dTTP synthesis. The sequence is that of Thymidylate kinase from Acholeplasma laidlawii (strain PG-8A).